A 241-amino-acid polypeptide reads, in one-letter code: Carboxy-S-adenosyl-L-methionine synthase (241 aa).

Residues Y38, 63-65 (GCS), 88-89 (DN), 116-117 (DI), N131, and R198 contribute to the S-adenosyl-L-methionine site.

The protein belongs to the class I-like SAM-binding methyltransferase superfamily. Cx-SAM synthase family. Homodimer.

It carries out the reaction prephenate + S-adenosyl-L-methionine = carboxy-S-adenosyl-L-methionine + 3-phenylpyruvate + H2O. Its function is as follows. Catalyzes the conversion of S-adenosyl-L-methionine (SAM) to carboxy-S-adenosyl-L-methionine (Cx-SAM). In Glaesserella parasuis serovar 5 (strain SH0165) (Haemophilus parasuis), this protein is Carboxy-S-adenosyl-L-methionine synthase.